The chain runs to 545 residues: CTP synthase (545 aa).

The interval 1 to 266 (MTHFIFVTGG…DDLICERFGY (266 aa)) is amidoligase domain. Serine 13 contacts CTP. Position 13 (serine 13) interacts with UTP. ATP is bound by residues 14–19 (SLGKGI) and aspartate 71. Residues aspartate 71 and glutamate 140 each contribute to the Mg(2+) site. CTP contacts are provided by residues 147–149 (DIE), 187–192 (KTKPTQ), and lysine 223. UTP contacts are provided by residues 187 to 192 (KTKPTQ) and lysine 223. 239 to 241 (KDA) is an ATP binding site. In terms of domain architecture, Glutamine amidotransferase type-1 spans 292-543 (RVAMVGKYVE…IDAAKKQHLK (252 aa)). Glycine 353 contacts L-glutamine. Cysteine 380 acts as the Nucleophile; for glutamine hydrolysis in catalysis. Residues 381–384 (LGMQ), glutamate 404, and arginine 471 contribute to the L-glutamine site. Catalysis depends on residues histidine 516 and glutamate 518.

Belongs to the CTP synthase family. In terms of assembly, homotetramer.

It catalyses the reaction UTP + L-glutamine + ATP + H2O = CTP + L-glutamate + ADP + phosphate + 2 H(+). The catalysed reaction is L-glutamine + H2O = L-glutamate + NH4(+). It carries out the reaction UTP + NH4(+) + ATP = CTP + ADP + phosphate + 2 H(+). Its pathway is pyrimidine metabolism; CTP biosynthesis via de novo pathway; CTP from UDP: step 2/2. Allosterically activated by GTP, when glutamine is the substrate; GTP has no effect on the reaction when ammonia is the substrate. The allosteric effector GTP functions by stabilizing the protein conformation that binds the tetrahedral intermediate(s) formed during glutamine hydrolysis. Inhibited by the product CTP, via allosteric rather than competitive inhibition. In terms of biological role, catalyzes the ATP-dependent amination of UTP to CTP with either L-glutamine or ammonia as the source of nitrogen. Regulates intracellular CTP levels through interactions with the four ribonucleotide triphosphates. The sequence is that of CTP synthase from Acinetobacter baylyi (strain ATCC 33305 / BD413 / ADP1).